The chain runs to 661 residues: Altered inheritance of mitochondria protein 3-1 (661 aa).

Disordered regions lie at residues 19–99, 116–142, 154–194, 263–419, 431–473, 487–563, and 615–661; these read TKTV…YSGY, AQNT…SQYN, QPAG…TFQS, LPQQ…DSSS, RNIP…SPGI, YAGH…RKDN, and EAAT…FVHS. Positions 37-58 are enriched in basic and acidic residues; the sequence is KDKDTHHTDHHEEDEYSEDYHT. A compositionally biased stretch (low complexity) spans 120 to 142; sequence PYSSPAQQQPVSPQPPVQNSQYN. Low complexity predominate over residues 263–318; that stretch reads LPQQQQQQQQQPEYNTQLQQNQQLHNQQAYGQQQQIYSNNTQPQYVSQTQQTSYTQ. Composition is skewed to polar residues over residues 319–328 and 356–371; these read NAPPQQTRSP and VNQT…NEAL. Residues 390–399 show a composition bias toward basic and acidic residues; it reads THRDRGRASV. The span at 406–419 shows a compositional bias: polar residues; sequence ENMQTNNSTIDSSS. A compositionally biased stretch (low complexity) spans 434–447; the sequence is PAPAVGPPGAATRA. 3 stretches are compositionally biased toward polar residues: residues 458-473, 512-533, and 541-552; these read SQSM…SPGI, RSTS…PSRD, and RSTVSSIQSSNR.

The protein belongs to the AIM3 family.

It localises to the membrane raft. The protein is Altered inheritance of mitochondria protein 3-1 (AIM3-1) of Candida glabrata (strain ATCC 2001 / BCRC 20586 / JCM 3761 / NBRC 0622 / NRRL Y-65 / CBS 138) (Yeast).